A 241-amino-acid chain; its full sequence is Glucosamine-6-phosphate deaminase (241 aa).

Aspartate 67 functions as the Proton acceptor; for enolization step in the catalytic mechanism. The For ring-opening step role is filled by asparagine 136. Catalysis depends on histidine 138, which acts as the Proton acceptor; for ring-opening step. The active-site For ring-opening step is glutamate 143.

It belongs to the glucosamine/galactosamine-6-phosphate isomerase family. NagB subfamily.

The catalysed reaction is alpha-D-glucosamine 6-phosphate + H2O = beta-D-fructose 6-phosphate + NH4(+). It participates in amino-sugar metabolism; N-acetylneuraminate degradation; D-fructose 6-phosphate from N-acetylneuraminate: step 5/5. In terms of biological role, catalyzes the reversible isomerization-deamination of glucosamine 6-phosphate (GlcN6P) to form fructose 6-phosphate (Fru6P) and ammonium ion. In Bacillus pumilus (strain SAFR-032), this protein is Glucosamine-6-phosphate deaminase.